We begin with the raw amino-acid sequence, 872 residues long: Alanine--tRNA ligase (872 aa).

Zn(2+) is bound by residues H567, H571, C669, and H673.

Belongs to the class-II aminoacyl-tRNA synthetase family. Requires Zn(2+) as cofactor.

The protein localises to the cytoplasm. It catalyses the reaction tRNA(Ala) + L-alanine + ATP = L-alanyl-tRNA(Ala) + AMP + diphosphate. Catalyzes the attachment of alanine to tRNA(Ala) in a two-step reaction: alanine is first activated by ATP to form Ala-AMP and then transferred to the acceptor end of tRNA(Ala). Also edits incorrectly charged Ser-tRNA(Ala) and Gly-tRNA(Ala) via its editing domain. This chain is Alanine--tRNA ligase, found in Streptococcus suis (strain 98HAH33).